Here is an 84-residue protein sequence, read N- to C-terminus: uncharacterized protein (84 aa).

Positions 5 to 31 (KIQEIINELDNLMNRERKYIELVATVE) form a coiled coil.

This is an uncharacterized protein from Methanocaldococcus jannaschii (strain ATCC 43067 / DSM 2661 / JAL-1 / JCM 10045 / NBRC 100440) (Methanococcus jannaschii).